A 362-amino-acid polypeptide reads, in one-letter code: Oxygen-dependent coproporphyrinogen-III oxidase (362 aa).

The disordered stretch occupies residues 12 to 31 (RQENDQSTPQLELPPTDSRD). Position 118 (Ser118) interacts with substrate. Positions 122 and 132 each coordinate a divalent metal cation. His132 functions as the Proton donor in the catalytic mechanism. 134–136 (NYR) provides a ligand contact to substrate. The a divalent metal cation site is built by His166 and His196. Residues 286 to 321 (YVEFNLVWDRGTIFGLQTNGRTESILMSLPPLVRWE) are important for dimerization.

It belongs to the aerobic coproporphyrinogen-III oxidase family. Homodimer. The cofactor is a divalent metal cation.

Its subcellular location is the cytoplasm. It catalyses the reaction coproporphyrinogen III + O2 + 2 H(+) = protoporphyrinogen IX + 2 CO2 + 2 H2O. It functions in the pathway porphyrin-containing compound metabolism; protoporphyrin-IX biosynthesis; protoporphyrinogen-IX from coproporphyrinogen-III (O2 route): step 1/1. In terms of biological role, involved in the heme and chlorophyll biosynthesis. Catalyzes the aerobic oxidative decarboxylation of propionate groups of rings A and B of coproporphyrinogen-III to yield the vinyl groups in protoporphyrinogen-IX. In Synechococcus sp. (strain CC9902), this protein is Oxygen-dependent coproporphyrinogen-III oxidase.